The primary structure comprises 516 residues: Cyclic AMP response element-binding protein A (516 aa).

A phosphoserine mark is found at Ser75, Ser79, and Ser82. Disordered regions lie at residues 213–237 (KDEPMSPDSSCPASPTSQASSSQHQ), 294–338 (KSEK…HLFA), and 353–408 (PAGG…KGST). Residues 221 to 237 (SSCPASPTSQASSSQHQ) show a composition bias toward low complexity. Positions 361-392 (RVSRTAASITRSSSGSASASGSSTSSTVTTTR) are enriched in low complexity. Residues 441–504 (SLKKIRRKIK…ANLLSQLHKL (64 aa)) enclose the bZIP domain. Residues 443–463 (KKIRRKIKNKISAQESRRKKK) are basic motif. The leucine-zipper stretch occupies residues 469-476 (LERRVEIL).

This sequence belongs to the bZIP family. As to quaternary structure, may bind DNA as heterodimers with other bZIP proteins. In all cell types examined, including developing salivary gland in embryos and in adults, brain and optic lobe cell bodies, salivary gland, midgut epithelial cells of the cardia, female ovarian columnar follicle cells and male seminal vesicle, ejaculatory duct, and ejaculatory bulb.

Its subcellular location is the nucleus. Its function is as follows. Transcriptional activator. Binds to fat body-specific enhancers of alcohol dehydrogenase (ADH) and yolk protein genes. BBF-2 may play a role in fat body gene expression. It binds the consensus sequence 5'-T[AC]NACGTAN[TG]C-3'. The sequence is that of Cyclic AMP response element-binding protein A (CrebA) from Drosophila melanogaster (Fruit fly).